The primary structure comprises 1239 residues: WD repeat-containing protein 11 (1239 aa).

WD repeat units follow at residues 63 to 112 (RHKA…AHCE), 115 to 158 (EHSK…KLWK), 358 to 398 (TKTV…SKSS), 476 to 515 (RMCPPLTTKNINHYQPLLAVGTSNGSVLVYNLTSGLLHKE), 571 to 610 (NDEPAIEMIKVSHLKQYLVVVFRDKPLELWDVRTGTLLRE), 713 to 750 (GSMGSIACIAWKGDTLVLGDVDGNLNFWDLKARLSRGV), 752 to 792 (THRG…MVSS), 798 to 836 (NVNYRILDIDWCTSDKVVLASDDGCVRVLEMAMKSASYR), and 898 to 944 (SLSN…IQAF). The segment at 1213-1239 (EDLSQTEGTGTESSPADDTDNSLVNIE) is disordered. A compositionally biased stretch (polar residues) spans 1215-1226 (LSQTEGTGTESS).

As to quaternary structure, component of the complex WDR11.

It localises to the cytoplasm. The protein localises to the cytoskeleton. Its subcellular location is the cilium basal body. The protein resides in the nucleus. It is found in the cilium axoneme. It localises to the cytoplasmic vesicle. The protein localises to the golgi apparatus. Its subcellular location is the trans-Golgi network. Functionally, involved in the Hedgehog (Hh) signaling pathway, is essential for normal ciliogenesis. Regulates the proteolytic processing of gli3 and cooperates with the transcription factor emx1 in the induction of downstream Hh pathway gene expression and gonadotropin-releasing hormone production. WDR11 complex facilitates the tethering of Adaptor protein-1 complex (AP-1)-derived vesicles. This is WD repeat-containing protein 11 (wdr11) from Danio rerio (Zebrafish).